The following is a 413-amino-acid chain: Serine hydroxymethyltransferase (413 aa).

(6S)-5,6,7,8-tetrahydrofolate contacts are provided by residues L117 and 121 to 123 (GHL). K226 bears the N6-(pyridoxal phosphate)lysine mark. Residue 349-351 (SPF) participates in (6S)-5,6,7,8-tetrahydrofolate binding.

It belongs to the SHMT family. As to quaternary structure, homodimer. The cofactor is pyridoxal 5'-phosphate.

The protein resides in the cytoplasm. It carries out the reaction (6R)-5,10-methylene-5,6,7,8-tetrahydrofolate + glycine + H2O = (6S)-5,6,7,8-tetrahydrofolate + L-serine. The protein operates within one-carbon metabolism; tetrahydrofolate interconversion. Its pathway is amino-acid biosynthesis; glycine biosynthesis; glycine from L-serine: step 1/1. Its function is as follows. Catalyzes the reversible interconversion of serine and glycine with tetrahydrofolate (THF) serving as the one-carbon carrier. This reaction serves as the major source of one-carbon groups required for the biosynthesis of purines, thymidylate, methionine, and other important biomolecules. Also exhibits THF-independent aldolase activity toward beta-hydroxyamino acids, producing glycine and aldehydes, via a retro-aldol mechanism. The chain is Serine hydroxymethyltransferase from Listeria innocua serovar 6a (strain ATCC BAA-680 / CLIP 11262).